Consider the following 583-residue polypeptide: MSAFLHHCPFLKSSPGPSARKVATYLNLADRCPIIVRQISAKAAQSSEQNGLLPHKEPKRQLATTATQVAVSMSQSCPFVSSKIGLVKASPQVQEDVQPNLENQDTSGLISSLFSGLQSHQSTGPTHLLQDNFNRPTFSYDEFFTQKIVEKKKDHTYRIFKTVNRFAEVFPFAEDYSIAGRLGSQVSVWCSNDYLGMSRHPRVVKAIGDALKKHGAGAGGTRNISGTSNYHVALENELARLHQKDGALVFSSCFVANDSTLFTLAKMLPGCEIYSDMGNHASMIQGIRNSGAKRFIFRHNDASHLEELLSRSDPLTPKIVAFETVHSMDGAICPLEELCDVAHKYGALTFVDEVHAVGLYGAHGAGVGERDNVMHKIDIVSGTLGKAFGCVGGYIASTAALVDTVRSFAAGFIFTTSLPPMVLAGALESVRVLKSDEGQALRRAHQRNVKHMRQLLLDAGLPVVNCPSHIIPIRVGNAAKNSEVCDILLEKHNIYVQAINYPTVPRGEELLRLAPSPFHNPIMMNYFAEKLLDVWQEVGLPLNGPAQASCTFCDRPLHFDLMSEWEKSYFGNMEPRYITVAAQ.

Arg158 is a succinyl-CoA binding site. Pyridoxal 5'-phosphate contacts are provided by Cys253 and Phe254. Succinyl-CoA is bound by residues Ser275 and Arg294. Pyridoxal 5'-phosphate contacts are provided by Ser327, His355, and Thr383. Lys386 is an active-site residue. At Lys386 the chain carries N6-(pyridoxal phosphate)lysine. 2 residues coordinate pyridoxal 5'-phosphate: Thr415 and Thr416. Succinyl-CoA is bound at residue Thr503.

Belongs to the class-II pyridoxal-phosphate-dependent aminotransferase family. Homodimer. Pyridoxal 5'-phosphate is required as a cofactor.

It is found in the mitochondrion inner membrane. The enzyme catalyses succinyl-CoA + glycine + H(+) = 5-aminolevulinate + CO2 + CoA. Its pathway is porphyrin-containing compound metabolism; protoporphyrin-IX biosynthesis; 5-aminolevulinate from glycine: step 1/1. Functionally, catalyzes the pyridoxal 5'-phosphate (PLP)-dependent condensation of succinyl-CoA and glycine to form aminolevulinic acid (ALA), with CoA and CO2 as by-products. Contributes significantly to heme formation during erythropoiesis. This chain is 5-aminolevulinate synthase, erythroid-specific, mitochondrial (alas2), found in Danio rerio (Zebrafish).